A 271-amino-acid polypeptide reads, in one-letter code: Thiazole synthase (271 aa).

K108 acts as the Schiff-base intermediate with DXP in catalysis. 1-deoxy-D-xylulose 5-phosphate contacts are provided by residues G169, 195–196, and 217–218; these read AG and NS.

It belongs to the ThiG family. As to quaternary structure, homotetramer. Forms heterodimers with either ThiH or ThiS.

It is found in the cytoplasm. The catalysed reaction is [ThiS sulfur-carrier protein]-C-terminal-Gly-aminoethanethioate + 2-iminoacetate + 1-deoxy-D-xylulose 5-phosphate = [ThiS sulfur-carrier protein]-C-terminal Gly-Gly + 2-[(2R,5Z)-2-carboxy-4-methylthiazol-5(2H)-ylidene]ethyl phosphate + 2 H2O + H(+). The protein operates within cofactor biosynthesis; thiamine diphosphate biosynthesis. In terms of biological role, catalyzes the rearrangement of 1-deoxy-D-xylulose 5-phosphate (DXP) to produce the thiazole phosphate moiety of thiamine. Sulfur is provided by the thiocarboxylate moiety of the carrier protein ThiS. In vitro, sulfur can be provided by H(2)S. The protein is Thiazole synthase of Prochlorococcus marinus (strain SARG / CCMP1375 / SS120).